A 105-amino-acid polypeptide reads, in one-letter code: Small ribosomal subunit protein uS10 (105 aa).

This sequence belongs to the universal ribosomal protein uS10 family. In terms of assembly, part of the 30S ribosomal subunit.

Its function is as follows. Involved in the binding of tRNA to the ribosomes. The chain is Small ribosomal subunit protein uS10 from Rickettsia conorii (strain ATCC VR-613 / Malish 7).